The chain runs to 472 residues: Protein hedgehog (472 aa).

A lipid anchor (N-palmitoyl cysteine) is attached at Cys-84. Ca(2+) contacts are provided by Glu-149, Asp-154, Glu-185, Asp-188, and Asp-190. Residue Gly-256 is the site of Cholesterol glycine ester attachment.

This sequence belongs to the hedgehog family. As to quaternary structure, interacts with shf. Post-translationally, the C-terminal part of the hedgehog protein precursor displays an autoproteolysis activity that results in the cleavage of the full-length protein into two parts (N-product and C-product). In addition, the C-terminal part displays a cholesterol transferase activity that results by the covalent attachment of a cholesterol moiety to the C-terminal of the newly generated N-product. The N-product is the active species in both local and long-range signaling, whereas the C-product has no signaling activity. In terms of processing, cholesterylation is required for N-product targeting to lipid rafts and multimerization. N-palmitoylation by Rasp of the hedgehog N-product, within the secretory pathway, is required for the embryonic and larval patterning activities of the hedgehog signal.

Its subcellular location is the nucleus. The protein localises to the cytoplasm. The protein resides in the cell membrane. The enzyme catalyses glycyl-L-cysteinyl-[protein] + cholesterol + H(+) = [protein]-C-terminal glycyl cholesterol ester + N-terminal L-cysteinyl-[protein]. The C-terminal part of the hedgehog protein precursor displays an autoproteolysis activity that results in the cleavage of the full-length protein into two parts (N-product and C-product). In addition, the C-terminal part displays a cholesterol transferase activity that results by the covalent attachment of a cholesterol moiety to the C-terminal of the newly generated N-product. Once cleaved, the C-product has no signaling activity and diffuses from the cell. Functionally, the dually lipidated hedgehog protein N-product is a morphogen which is essential for a variety of patterning events during development. Establishes the anterior-posterior axis of the embryonic segments and patterns the larval imaginal disks. Binds to the patched (ptc) receptor, which functions in association with smoothened (smo), to activate the transcription of target genes wingless (wg), decapentaplegic (dpp) and ptc. In the absence of hh, ptc represses the constitutive signaling activity of smo through fused (fu). Essential component of a signaling pathway which regulates the Duox-dependent gut immune response to bacterial uracil; required to activate Cad99C-dependent endosome formation, norpA-dependent Ca2+ mobilization and p38 MAPK, which are essential steps in the Duox-dependent production of reactive oxygen species (ROS) in response to intestinal bacterial infection. During photoreceptor differentiation, it up-regulates transcription of Ubr3, which in turn promotes the hh-signaling pathway by mediating the ubiquitination and degradation of cos. The protein is Protein hedgehog of Drosophila ananassae (Fruit fly).